Consider the following 239-residue polypeptide: U-scoloptoxin(11)-Sm3a (239 aa).

The N-terminal stretch at 1–16 (MINFLLLVLILSVLES) is a signal peptide.

This sequence belongs to the scoloptoxin-11 family. Contains 9 disulfide bonds. In terms of tissue distribution, expressed by the venom gland.

Its subcellular location is the secreted. The chain is U-scoloptoxin(11)-Sm3a from Scolopendra morsitans (Tanzanian blue ringleg centipede).